Reading from the N-terminus, the 760-residue chain is Xaa-Pro dipeptidyl-peptidase (760 aa).

Catalysis depends on charge relay system residues Ser-349, Asp-469, and His-499.

Belongs to the peptidase S15 family. In terms of assembly, homodimer.

Its subcellular location is the cytoplasm. It carries out the reaction Hydrolyzes Xaa-Pro-|- bonds to release unblocked, N-terminal dipeptides from substrates including Ala-Pro-|-p-nitroanilide and (sequentially) Tyr-Pro-|-Phe-Pro-|-Gly-Pro-|-Ile.. In terms of biological role, removes N-terminal dipeptides sequentially from polypeptides having unsubstituted N-termini provided that the penultimate residue is proline. This chain is Xaa-Pro dipeptidyl-peptidase, found in Streptococcus pyogenes serotype M5 (strain Manfredo).